Here is a 158-residue protein sequence, read N- to C-terminus: Urease accessory protein UreE (158 aa).

It belongs to the UreE family.

The protein resides in the cytoplasm. In terms of biological role, involved in urease metallocenter assembly. Binds nickel. Probably functions as a nickel donor during metallocenter assembly. This is Urease accessory protein UreE from Corynebacterium urealyticum (strain ATCC 43042 / DSM 7109).